We begin with the raw amino-acid sequence, 638 residues long: DNA mismatch repair protein MutL (638 aa).

The interval 404–433 is disordered; the sequence is FGTQTNAFGSMATPRDNSRGNYSAGESRQR.

Belongs to the DNA mismatch repair MutL/HexB family.

This protein is involved in the repair of mismatches in DNA. It is required for dam-dependent methyl-directed DNA mismatch repair. May act as a 'molecular matchmaker', a protein that promotes the formation of a stable complex between two or more DNA-binding proteins in an ATP-dependent manner without itself being part of a final effector complex. The polypeptide is DNA mismatch repair protein MutL (Shewanella baltica (strain OS195)).